The following is a 192-amino-acid chain: Ion-translocating oxidoreductase complex subunit A (192 aa).

Transmembrane regions (helical) follow at residues 5–25 (ILLI…FLGL), 39–59 (VGMG…AYLV), 63–83 (ILIP…VIAV), 102–122 (LLGI…VALL), 134–154 (VVYG…FAAL), and 171–191 (SIAL…TGLV).

This sequence belongs to the NqrDE/RnfAE family. As to quaternary structure, the complex is composed of six subunits: RnfA, RnfB, RnfC, RnfD, RnfE and RnfG.

It is found in the cell inner membrane. Functionally, part of a membrane-bound complex that couples electron transfer with translocation of ions across the membrane. The chain is Ion-translocating oxidoreductase complex subunit A from Haemophilus influenzae (strain ATCC 51907 / DSM 11121 / KW20 / Rd).